Reading from the N-terminus, the 208-residue chain is Small ribosomal subunit protein eS8 (208 aa).

A disordered region spans residues 1-34; that stretch reads MGISRDHWHKRRATGGKRAPIRKKRKYELGRPAA. Residues 7–26 are compositionally biased toward basic residues; sequence HWHKRRATGGKRAPIRKKRK.

It belongs to the eukaryotic ribosomal protein eS8 family. In terms of assembly, component of the small ribosomal subunit. Identified in a IGF2BP1-dependent mRNP granule complex containing untranslated mRNAs. Part of the small subunit (SSU) processome, composed of more than 70 proteins and the RNA chaperone small nucleolar RNA (snoRNA) U3.

It is found in the cytoplasm. The protein localises to the membrane. Its subcellular location is the nucleus. The protein resides in the nucleolus. In terms of biological role, component of the small ribosomal subunit. The ribosome is a large ribonucleoprotein complex responsible for the synthesis of proteins in the cell. Part of the small subunit (SSU) processome, first precursor of the small eukaryotic ribosomal subunit. During the assembly of the SSU processome in the nucleolus, many ribosome biogenesis factors, an RNA chaperone and ribosomal proteins associate with the nascent pre-rRNA and work in concert to generate RNA folding, modifications, rearrangements and cleavage as well as targeted degradation of pre-ribosomal RNA by the RNA exosome. In Spodoptera frugiperda (Fall armyworm), this protein is Small ribosomal subunit protein eS8 (RpS8).